The chain runs to 258 residues: 14-3-3-like protein 16R (258 aa).

The tract at residues 238–258 is disordered; sequence DMQDDGTDEIKEAAPKPDNNE. Positions 245–258 are enriched in basic and acidic residues; sequence DEIKEAAPKPDNNE.

Belongs to the 14-3-3 family.

The protein is 14-3-3-like protein 16R of Solanum tuberosum (Potato).